Here is an 81-residue protein sequence, read N- to C-terminus: Large ribosomal subunit protein bL31B (81 aa).

This sequence belongs to the bacterial ribosomal protein bL31 family. Type B subfamily. In terms of assembly, part of the 50S ribosomal subunit.

The polypeptide is Large ribosomal subunit protein bL31B (Cutibacterium acnes (strain DSM 16379 / KPA171202) (Propionibacterium acnes)).